A 461-amino-acid polypeptide reads, in one-letter code: Fumarate hydratase class II (461 aa).

Substrate contacts are provided by residues 97–99, 127–130, 137–139, and Thr185; these read SGT, HPND, and SSN. The Proton donor/acceptor role is filled by His186. Ser316 is an active-site residue. Substrate is bound by residues Ser317 and 322–324; that span reads KVN.

This sequence belongs to the class-II fumarase/aspartase family. Fumarase subfamily. In terms of assembly, homotetramer.

The protein localises to the cytoplasm. It catalyses the reaction (S)-malate = fumarate + H2O. It participates in carbohydrate metabolism; tricarboxylic acid cycle; (S)-malate from fumarate: step 1/1. In terms of biological role, involved in the TCA cycle. Catalyzes the stereospecific interconversion of fumarate to L-malate. This chain is Fumarate hydratase class II, found in Staphylococcus haemolyticus (strain JCSC1435).